Here is a 225-residue protein sequence, read N- to C-terminus: Membrane protein (225 aa).

The Virion surface segment spans residues 1–20 (MSNETNCTLDFEQSVQLFKE). Residues Asn-3 and Asn-6 are each glycosylated (N-linked (GlcNAc...) asparagine; by host). Residues 21 to 41 (YNLFITAFLLFLTIILQYGYA) traverse the membrane as a helical segment. At 42–51 (TRSKVIYTLK) the chain is on the intravirion side. The chain crosses the membrane as a helical span at residues 52–72 (MIVLWCFWPLNIAVGVISCIY). The Virion surface segment spans residues 73 to 77 (PPNTG). A helical transmembrane segment spans residues 78-98 (GLVAAIILTVFACLSFVGYWI). Residues 99 to 225 (QSIRLFKRCR…VATGGSSLYT (127 aa)) are Intravirion-facing.

It belongs to the gammacoronaviruses M protein family. Homomultimer. Interacts with envelope E protein in the budding compartment of the host cell, which is located between endoplasmic reticulum and the Golgi complex. Forms a complex with HE and S proteins. Interacts with nucleocapsid N protein. This interaction probably participates in RNA packaging into the virus.

The protein resides in the virion membrane. It localises to the host Golgi apparatus membrane. Its function is as follows. Component of the viral envelope that plays a central role in virus morphogenesis and assembly via its interactions with other viral proteins. This is Membrane protein from Gallus gallus (Chicken).